A 270-amino-acid polypeptide reads, in one-letter code: Glyoxylate pathway regulator (270 aa).

The segment at 1–33 is disordered; the sequence is MNTEIPDLEKQQIDHNSGSDDPQPIHDDMAPVS. At Tyr58 the chain carries Phosphotyrosine. Residue Ser74 is modified to Phosphoserine. The next 6 membrane-spanning stretches (helical) occupy residues 80-100, 109-129, 137-157, 175-195, 198-218, and 227-247; these read PAPL…LCTV, SIAV…AGMW, FGAA…AIEM, AVGI…LCTL, TVAF…LACA, and AIGG…NAYA.

The protein belongs to the acetate uptake transporter (AceTr) (TC 2.A.96) family.

The protein resides in the membrane. In terms of biological role, plays a role in the adaptation of cell metabolism to the utilization of acetic acid, possibly by inhibiting an anion-transporting ATPase and affecting the plasma membrane H(+)-ATPase. May be indirectly involved in the repression of genes encoding glyoxylate cycle enzymes. The polypeptide is Glyoxylate pathway regulator (GPR1) (Yarrowia lipolytica (strain CLIB 122 / E 150) (Yeast)).